Reading from the N-terminus, the 299-residue chain is Tyrosine recombinase XerC (299 aa).

The region spanning 1-85 (MERQLDAYCE…AVRGLYHYLN (85 aa)) is the Core-binding (CB) domain. In terms of domain architecture, Tyr recombinase spans 106 to 285 (RLPKTLDTDR…DFQHLAAVYD (180 aa)). Catalysis depends on residues Arg146, Lys170, His237, Arg240, and His263. Tyr272 functions as the O-(3'-phospho-DNA)-tyrosine intermediate in the catalytic mechanism.

It belongs to the 'phage' integrase family. XerC subfamily. In terms of assembly, forms a cyclic heterotetrameric complex composed of two molecules of XerC and two molecules of XerD.

It is found in the cytoplasm. In terms of biological role, site-specific tyrosine recombinase, which acts by catalyzing the cutting and rejoining of the recombining DNA molecules. The XerC-XerD complex is essential to convert dimers of the bacterial chromosome into monomers to permit their segregation at cell division. It also contributes to the segregational stability of plasmids. The protein is Tyrosine recombinase XerC of Pseudomonas fluorescens (strain Pf0-1).